The sequence spans 304 residues: Acetylglutamate kinase (304 aa).

Residues 70-71 (GG), arginine 92, and asparagine 196 each bind substrate.

The protein belongs to the acetylglutamate kinase family. ArgB subfamily.

The protein localises to the cytoplasm. The catalysed reaction is N-acetyl-L-glutamate + ATP = N-acetyl-L-glutamyl 5-phosphate + ADP. The protein operates within amino-acid biosynthesis; L-arginine biosynthesis; N(2)-acetyl-L-ornithine from L-glutamate: step 2/4. Catalyzes the ATP-dependent phosphorylation of N-acetyl-L-glutamate. The protein is Acetylglutamate kinase of Methanococcoides burtonii (strain DSM 6242 / NBRC 107633 / OCM 468 / ACE-M).